The chain runs to 261 residues: Probable RNA-binding protein ARP1 (261 aa).

The RRM domain maps to 17 to 94; sequence TKVFVGGLAW…RRANCNLASL (78 aa). Positions 96-122 are disordered; that stretch reads GRLRKSPTMTSPQQGPKNGNRATPPHV. Residues 102–116 are compositionally biased toward polar residues; that stretch reads PTMTSPQQGPKNGNR.

As to expression, expressed in vasculature of leaves, roots and siliques.

The protein resides in the nucleus. Its function is as follows. Probable RNA-binding protein involved in the regulation of abscisic acid (ABA) response during seed germination. May regulate transcript levels of several germination-responsive genes under ABA. In Arabidopsis thaliana (Mouse-ear cress), this protein is Probable RNA-binding protein ARP1.